The sequence spans 397 residues: 1-deoxy-D-xylulose 5-phosphate reductoisomerase (397 aa).

T12, G13, S14, I15, G38, K39, N40, and N126 together coordinate NADPH. K127 contributes to the 1-deoxy-D-xylulose 5-phosphate binding site. E128 is a binding site for NADPH. D152 provides a ligand contact to Mn(2+). Residues S153, E154, S188, and H211 each coordinate 1-deoxy-D-xylulose 5-phosphate. E154 is a binding site for Mn(2+). An NADPH-binding site is contributed by G217. 1-deoxy-D-xylulose 5-phosphate is bound by residues S224, N229, K230, and E233. E233 provides a ligand contact to Mn(2+).

This sequence belongs to the DXR family. It depends on Mg(2+) as a cofactor. Mn(2+) is required as a cofactor.

It carries out the reaction 2-C-methyl-D-erythritol 4-phosphate + NADP(+) = 1-deoxy-D-xylulose 5-phosphate + NADPH + H(+). The protein operates within isoprenoid biosynthesis; isopentenyl diphosphate biosynthesis via DXP pathway; isopentenyl diphosphate from 1-deoxy-D-xylulose 5-phosphate: step 1/6. In terms of biological role, catalyzes the NADPH-dependent rearrangement and reduction of 1-deoxy-D-xylulose-5-phosphate (DXP) to 2-C-methyl-D-erythritol 4-phosphate (MEP). This is 1-deoxy-D-xylulose 5-phosphate reductoisomerase from Haemophilus influenzae (strain PittEE).